Consider the following 118-residue polypeptide: UPF0449 protein C19orf25 (118 aa).

Tyr63 is subject to Phosphotyrosine. Positions 81-109 form a coiled coil; that stretch reads NVLRQRCELLQRAGEDLEREVAQMKQAAL.

It belongs to the UPF0449 family.

The chain is UPF0449 protein C19orf25 (C19orf25) from Homo sapiens (Human).